A 91-amino-acid chain; its full sequence is Sec-independent protein translocase protein TatA (91 aa).

Residues 1 to 21 (MGAMQPMHWLIVAVVVVILFG) form a helical membrane-spanning segment.

This sequence belongs to the TatA/E family. The Tat system comprises two distinct complexes: a TatABC complex, containing multiple copies of TatA, TatB and TatC subunits, and a separate TatA complex, containing only TatA subunits. Substrates initially bind to the TatABC complex, which probably triggers association of the separate TatA complex to form the active translocon.

The protein resides in the cell membrane. Functionally, part of the twin-arginine translocation (Tat) system that transports large folded proteins containing a characteristic twin-arginine motif in their signal peptide across membranes. TatA could form the protein-conducting channel of the Tat system. The polypeptide is Sec-independent protein translocase protein TatA (Rhodococcus erythropolis (strain PR4 / NBRC 100887)).